An 83-amino-acid polypeptide reads, in one-letter code: Putative beta-neurotoxin RjAa15f (83 aa).

Residues 1–18 (MKILIFIIASFMLIGVEC) form the signal peptide. Positions 19 to 82 (KEGYPMGRNG…VWDSSNNKCV (64 aa)) constitute an LCN-type CS-alpha/beta domain. Disulfide bonds link C29/C81, C33/C55, C40/C62, and C44/C64.

It belongs to the long (4 C-C) scorpion toxin superfamily. Sodium channel inhibitor family. Beta subfamily. Expressed by the venom gland.

Its subcellular location is the secreted. Its function is as follows. Beta toxins bind voltage-independently at site-4 of sodium channels (Nav) and shift the voltage of activation toward more negative potentials thereby affecting sodium channel activation and promoting spontaneous and repetitive firing. This chain is Putative beta-neurotoxin RjAa15f, found in Rhopalurus junceus (Caribbean blue scorpion).